The following is a 79-amino-acid chain: Small ribosomal subunit protein bS21A (79 aa).

Positions 57–79 (LARKKLQREGLLPAPKKVLRPTR) are disordered.

Belongs to the bacterial ribosomal protein bS21 family.

The chain is Small ribosomal subunit protein bS21A from Rhizobium johnstonii (strain DSM 114642 / LMG 32736 / 3841) (Rhizobium leguminosarum bv. viciae).